The sequence spans 450 residues: Regulator of sigma-E protease RseP (450 aa).

Residues 1–21 form a helical membrane-spanning segment; that stretch reads MLSILWNLAAFIIALGVLITV. Residue histidine 22 coordinates Zn(2+). Over 22-103 the chain is Periplasmic; the sequence is HEFGHFWVAR…VGQRAAIIAA (82 aa). Glutamate 23 is a catalytic residue. Histidine 26 is a binding site for Zn(2+). The chain crosses the membrane as a helical span at residues 104–124; the sequence is GPVANFIFAIFAYWLVFIIGV. 2 PDZ domains span residues 115–186 and 199–291; these read AYWL…APFG and HWAF…TPDT. Residues 125-375 lie on the Cytoplasmic side of the membrane; that stretch reads PGVRPVIGEI…QGAGMSAEFG (251 aa). Residues 376–396 traverse the membrane as a helical segment; sequence VIYYLMFLALISVNLGIINLF. Topologically, residues 397 to 429 are periplasmic; sequence PLPVLDGGHLLFLAIEKLKGGPVSERVQDFSYR. The chain crosses the membrane as a helical span at residues 430-450; it reads IGSILLVLLMGLALFNDFSRL.

It belongs to the peptidase M50B family. Zn(2+) serves as cofactor.

The protein resides in the cell inner membrane. Its function is as follows. A site-2 regulated intramembrane protease that cleaves the peptide bond between 'Ala-108' and 'Cys-109' in the transmembrane region of RseA. Part of a regulated intramembrane proteolysis (RIP) cascade. Acts on DegS-cleaved RseA to release the cytoplasmic domain of RseA. This provides the cell with sigma-E (RpoE) activity through the proteolysis of RseA. This Salmonella typhimurium (strain 14028s / SGSC 2262) protein is Regulator of sigma-E protease RseP (rsep).